The sequence spans 171 residues: Secreted LysM effector Blys4 (171 aa).

The 45-residue stretch at K125 to L169 folds into the LysM domain.

Belongs to the secreted LysM effector family.

Might have a role in sequestration of chitin oligosaccharides (breakdown products of fungal cell walls that are released during invasion and act as triggers of host immunity) to dampen host defense. This chain is Secreted LysM effector Blys4, found in Beauveria bassiana (strain ARSEF 2860) (White muscardine disease fungus).